A 567-amino-acid chain; its full sequence is Proline--tRNA ligase (567 aa).

It belongs to the class-II aminoacyl-tRNA synthetase family. ProS type 1 subfamily. Homodimer.

It is found in the cytoplasm. The catalysed reaction is tRNA(Pro) + L-proline + ATP = L-prolyl-tRNA(Pro) + AMP + diphosphate. In terms of biological role, catalyzes the attachment of proline to tRNA(Pro) in a two-step reaction: proline is first activated by ATP to form Pro-AMP and then transferred to the acceptor end of tRNA(Pro). As ProRS can inadvertently accommodate and process non-cognate amino acids such as alanine and cysteine, to avoid such errors it has two additional distinct editing activities against alanine. One activity is designated as 'pretransfer' editing and involves the tRNA(Pro)-independent hydrolysis of activated Ala-AMP. The other activity is designated 'posttransfer' editing and involves deacylation of mischarged Ala-tRNA(Pro). The misacylated Cys-tRNA(Pro) is not edited by ProRS. This is Proline--tRNA ligase from Stenotrophomonas maltophilia (strain K279a).